Consider the following 429-residue polypeptide: Bifunctional protein GlmU (429 aa).

Residues 1–223 are pyrophosphorylase; the sequence is MKTSILILAA…EDEFMGINDK (223 aa). Residues 8–11, K22, and 81–82 each bind UDP-N-acetyl-alpha-D-glucosamine; these read LAAG and GT. D102 is a Mg(2+) binding site. Residues G135, E149, N164, and N221 each contribute to the UDP-N-acetyl-alpha-D-glucosamine site. Position 221 (N221) interacts with Mg(2+). The segment at 224–244 is linker; that stretch reads FELSIAENFMQEKIKKYWMQQ. The interval 245 to 429 is N-acetyltransferase; it reads GVIFHLPQST…KDYYYKKFQK (185 aa). UDP-N-acetyl-alpha-D-glucosamine is bound by residues R308 and K325. Residue H336 is the Proton acceptor of the active site. Residues Y339 and N350 each coordinate UDP-N-acetyl-alpha-D-glucosamine. Residues 359-360, S378, A396, and R413 contribute to the acetyl-CoA site; that span reads NY.

This sequence in the N-terminal section; belongs to the N-acetylglucosamine-1-phosphate uridyltransferase family. It in the C-terminal section; belongs to the transferase hexapeptide repeat family. In terms of assembly, homotrimer. It depends on Mg(2+) as a cofactor.

The protein localises to the cytoplasm. It carries out the reaction alpha-D-glucosamine 1-phosphate + acetyl-CoA = N-acetyl-alpha-D-glucosamine 1-phosphate + CoA + H(+). The catalysed reaction is N-acetyl-alpha-D-glucosamine 1-phosphate + UTP + H(+) = UDP-N-acetyl-alpha-D-glucosamine + diphosphate. Its pathway is nucleotide-sugar biosynthesis; UDP-N-acetyl-alpha-D-glucosamine biosynthesis; N-acetyl-alpha-D-glucosamine 1-phosphate from alpha-D-glucosamine 6-phosphate (route II): step 2/2. It participates in nucleotide-sugar biosynthesis; UDP-N-acetyl-alpha-D-glucosamine biosynthesis; UDP-N-acetyl-alpha-D-glucosamine from N-acetyl-alpha-D-glucosamine 1-phosphate: step 1/1. The protein operates within bacterial outer membrane biogenesis; LPS lipid A biosynthesis. Functionally, catalyzes the last two sequential reactions in the de novo biosynthetic pathway for UDP-N-acetylglucosamine (UDP-GlcNAc). The C-terminal domain catalyzes the transfer of acetyl group from acetyl coenzyme A to glucosamine-1-phosphate (GlcN-1-P) to produce N-acetylglucosamine-1-phosphate (GlcNAc-1-P), which is converted into UDP-GlcNAc by the transfer of uridine 5-monophosphate (from uridine 5-triphosphate), a reaction catalyzed by the N-terminal domain. The sequence is that of Bifunctional protein GlmU from Campylobacter jejuni (strain RM1221).